Here is a 255-residue protein sequence, read N- to C-terminus: Probable sulfate transport system permease protein cysT (255 aa).

Helical transmembrane passes span leucine 2–leucine 22, methionine 48–threonine 68, phenylalanine 77–leucine 97, isoleucine 118–isoleucine 138, phenylalanine 167–phenylalanine 187, glycine 195–isoleucine 215, and phenylalanine 225–isoleucine 245. The 205-residue stretch at tyrosine 42–asparagine 246 folds into the ABC transmembrane type-1 domain.

Belongs to the binding-protein-dependent transport system permease family. CysTW subfamily.

It localises to the plastid membrane. Functionally, part of the ABC transporter complex cysAWTP (TC 3.A.1.6.1) involved in sulfate/thiosulfate import. Probably responsible for the translocation of the substrate across the membrane. The protein is Probable sulfate transport system permease protein cysT (cysT) of Prototheca wickerhamii.